Consider the following 459-residue polypeptide: Bifunctional protein GlmU (459 aa).

The interval 1–229 (MSNYAIILAA…FDESLGVNDR (229 aa)) is pyrophosphorylase. Residues 8 to 11 (LAAG), Lys-22, Gln-72, and 77 to 78 (GT) contribute to the UDP-N-acetyl-alpha-D-glucosamine site. Asp-102 is a binding site for Mg(2+). The UDP-N-acetyl-alpha-D-glucosamine site is built by Gly-139, Glu-154, Asn-169, and Asn-227. Asn-227 is a binding site for Mg(2+). The tract at residues 230–250 (VALATAEKVMRHRIARQHMVN) is linker. Residues 251–459 (GVTVVNPDSA…NKKPHHPSQK (209 aa)) form an N-acetyltransferase region. UDP-N-acetyl-alpha-D-glucosamine contacts are provided by Arg-332 and Lys-350. His-362 serves as the catalytic Proton acceptor. UDP-N-acetyl-alpha-D-glucosamine contacts are provided by Tyr-365 and Asn-376. Acetyl-CoA contacts are provided by residues Ala-379, 385–386 (NY), Ser-404, Ala-422, and Arg-439.

This sequence in the N-terminal section; belongs to the N-acetylglucosamine-1-phosphate uridyltransferase family. In the C-terminal section; belongs to the transferase hexapeptide repeat family. In terms of assembly, homotrimer. It depends on Mg(2+) as a cofactor.

It localises to the cytoplasm. It carries out the reaction alpha-D-glucosamine 1-phosphate + acetyl-CoA = N-acetyl-alpha-D-glucosamine 1-phosphate + CoA + H(+). It catalyses the reaction N-acetyl-alpha-D-glucosamine 1-phosphate + UTP + H(+) = UDP-N-acetyl-alpha-D-glucosamine + diphosphate. Its pathway is nucleotide-sugar biosynthesis; UDP-N-acetyl-alpha-D-glucosamine biosynthesis; N-acetyl-alpha-D-glucosamine 1-phosphate from alpha-D-glucosamine 6-phosphate (route II): step 2/2. It participates in nucleotide-sugar biosynthesis; UDP-N-acetyl-alpha-D-glucosamine biosynthesis; UDP-N-acetyl-alpha-D-glucosamine from N-acetyl-alpha-D-glucosamine 1-phosphate: step 1/1. The protein operates within bacterial outer membrane biogenesis; LPS lipid A biosynthesis. Its function is as follows. Catalyzes the last two sequential reactions in the de novo biosynthetic pathway for UDP-N-acetylglucosamine (UDP-GlcNAc). The C-terminal domain catalyzes the transfer of acetyl group from acetyl coenzyme A to glucosamine-1-phosphate (GlcN-1-P) to produce N-acetylglucosamine-1-phosphate (GlcNAc-1-P), which is converted into UDP-GlcNAc by the transfer of uridine 5-monophosphate (from uridine 5-triphosphate), a reaction catalyzed by the N-terminal domain. This Streptococcus agalactiae serotype III (strain NEM316) protein is Bifunctional protein GlmU.